Reading from the N-terminus, the 159-residue chain is Transmembrane protein 92 (159 aa).

A signal peptide spans M1–A26. The Extracellular portion of the chain corresponds to K27–R57. Residues I58–C78 traverse the membrane as a helical segment. Over F79–F159 the chain is Cytoplasmic. The tract at residues E122 to F159 is disordered.

Its subcellular location is the membrane. The sequence is that of Transmembrane protein 92 (TMEM92) from Homo sapiens (Human).